Consider the following 357-residue polypeptide: Sulfate/thiosulfate import ATP-binding protein CysA (357 aa).

In terms of domain architecture, ABC transporter spans 3-237 (IQIQGVSKQY…PASPFVYDFL (235 aa)). ATP is bound at residue 35–42 (GPSGSGKT).

Belongs to the ABC transporter superfamily. Sulfate/tungstate importer (TC 3.A.1.6) family. As to quaternary structure, the complex is composed of two ATP-binding proteins (CysA), two transmembrane proteins (CysT and CysW) and a solute-binding protein (CysP).

It localises to the cell membrane. The catalysed reaction is sulfate(out) + ATP + H2O = sulfate(in) + ADP + phosphate + H(+). The enzyme catalyses thiosulfate(out) + ATP + H2O = thiosulfate(in) + ADP + phosphate + H(+). Part of the ABC transporter complex CysAWTP involved in sulfate/thiosulfate import. Responsible for energy coupling to the transport system. The protein is Sulfate/thiosulfate import ATP-binding protein CysA of Bacillus cereus (strain ATCC 14579 / DSM 31 / CCUG 7414 / JCM 2152 / NBRC 15305 / NCIMB 9373 / NCTC 2599 / NRRL B-3711).